Reading from the N-terminus, the 476-residue chain is Proline dehydrogenase 2, mitochondrial (476 aa).

The transit peptide at 1–29 (MANRFLRPNLIHRFSTVSPVGPPTTIIPE) directs the protein to the mitochondrion.

This sequence belongs to the proline oxidase family. FAD is required as a cofactor. Expressed in the vascular tissue and in the abscission zone of petals, sepals, stamina, pistils and siliques. Not detected in petioles.

Its subcellular location is the mitochondrion. The enzyme catalyses L-proline + a quinone = (S)-1-pyrroline-5-carboxylate + a quinol + H(+). It functions in the pathway amino-acid degradation; L-proline degradation into L-glutamate; L-glutamate from L-proline: step 1/2. Converts proline to delta-1-pyrroline-5-carboxylate. The sequence is that of Proline dehydrogenase 2, mitochondrial (POX2) from Arabidopsis thaliana (Mouse-ear cress).